The sequence spans 353 residues: Protein CYTOKININ-RESPONSIVE GATA TRANSCRIPTION FACTOR 1 (353 aa).

The Nuclear localization signal 1 signature appears at 137-144; sequence IRKGAATD. The segment at 142–166 is disordered; the sequence is ATDPEGGAVRKPRRRAQAHQDESQQ. The GATA-type zinc-finger motif lies at 178 to 203; that stretch reads CSDCNTTKTPLWRSGPCGPKSLCNAC. A Nuclear localization signal 2 motif is present at residues 244-251; it reads EKRAADVD.

It belongs to the type IV zinc-finger family. Class B subfamily. Mostly expressed in leaves and stems, and, at low levels, in roots.

The protein resides in the nucleus. Transcriptional regulator that specifically binds 5'-GATA-3' or 5'-GAT-3' motifs within gene promoters. Influences the expression of nuclear encoded chloroplast-targeted genes. Regulates chloroplast development and promotes chlorophyll accumulation. Modulates plant architecture (e.g. height, length and width of leaf blades, and flowering tillers production) and represses tillering, probably by modulating number of cells. Promotes senescence. Involved in grain filling, panicle development and starch production. The chain is Protein CYTOKININ-RESPONSIVE GATA TRANSCRIPTION FACTOR 1 from Oryza sativa subsp. japonica (Rice).